An 89-amino-acid polypeptide reads, in one-letter code: DNA/RNA-binding protein Alba 2 (89 aa).

The residue at position 12 (Lys-12) is an N6-acetyllysine. Residues Lys-14, Asp-18, and Asp-22 each contribute to the Zn(2+) site.

This sequence belongs to the histone-like Alba family. As to quaternary structure, forms homodimers and homotetramers. Homodimer at pH below 6.0. Forms homotetramers and higher order homooligomers at near the growth temperature of 80 degrees Celsius and pH 7.0. Interacts with Alba 1; heterodimers lack cooperative DNA-binding behavior and result in more compact chromatin structures compared to Alba 1 homodimers. Post-translationally, acetylated. Acetylation at Lys-12 decreases DNA-binding affinity.

The protein resides in the cytoplasm. Its subcellular location is the chromosome. Its function is as follows. Binds single-stranded DNA, RNA and double-stranded DNA. Involved in DNA compaction. This Saccharolobus solfataricus (strain ATCC 35092 / DSM 1617 / JCM 11322 / P2) (Sulfolobus solfataricus) protein is DNA/RNA-binding protein Alba 2.